The following is a 259-amino-acid chain: Protein odd-skipped-related 1 (259 aa).

3 consecutive C2H2-type zinc fingers follow at residues 168 to 190 (FVCKFCGRHFTKSYNLLIHERTH), 196 to 218 (YTCDICHKAFRRQDHLRDHRYIH), and 224 to 246 (FKCQECGKGFCQSRTLAVHKTLH).

This sequence belongs to the Odd C2H2-type zinc-finger protein family. In terms of tissue distribution, at early gastrula stage, expressed in the involuting mesoderm and endoderm. During neurulation, expressed in the pronephric primordium, following expression of osr2. During tailbud (stage 35), expressed in the rectal diverticulum and in the kidney ducts.

It is found in the nucleus. In terms of biological role, transcriptional repressor. Required for pronephric kidney development. This chain is Protein odd-skipped-related 1, found in Xenopus laevis (African clawed frog).